We begin with the raw amino-acid sequence, 91 residues long: Insertion element IS1 7 protein InsA (91 aa).

The protein belongs to the IS1 elements InsA family.

Its function is as follows. Absolutely required for transposition of IS1. This chain is Insertion element IS1 7 protein InsA (insA7), found in Escherichia coli (strain K12).